The sequence spans 1323 residues: Receptor tyrosine-protein kinase let-23 (1323 aa).

A signal peptide spans 1 to 20 (MRYPPSIGSILLIIPIFLTF). Topologically, residues 21 to 818 (FGNSNAQLWK…DIASRQRKTR (798 aa)) are extracellular. Asn91 and Asn169 each carry an N-linked (GlcNAc...) asparagine glycan. 11 disulfide bridges follow: Cys220/Cys228, Cys224/Cys236, Cys244/Cys251, Cys248/Cys262, Cys263/Cys271, Cys267/Cys279, Cys282/Cys291, Cys295/Cys322, Cys326/Cys337, Cys341/Cys356, and Cys359/Cys364. Asn255 carries N-linked (GlcNAc...) asparagine glycosylation. N-linked (GlcNAc...) asparagine glycosylation is present at Asn376. Intrachain disulfides connect Cys520/Cys529, Cys524/Cys537, Cys540/Cys549, Cys553/Cys567, Cys570/Cys577, Cys574/Cys585, Cys588/Cys604, Cys608/Cys620, Cys623/Cys632, Cys627/Cys644, Cys647/Cys660, Cys670/Cys693, Cys696/Cys703, Cys700/Cys715, Cys717/Cys731, Cys735/Cys750, Cys753/Cys763, Cys757/Cys771, Cys774/Cys787, and Cys791/Cys805. An N-linked (GlcNAc...) asparagine glycan is attached at Asn561. A glycan (N-linked (GlcNAc...) asparagine) is linked at Asn655. N-linked (GlcNAc...) asparagine glycosylation occurs at Asn746. Asn776 carries N-linked (GlcNAc...) asparagine glycosylation. A helical membrane pass occupies residues 819–839 (MVIIGSVLFGFAVMFLFILLV). Topologically, residues 840–1323 (YWRCQRIGKK…EEVSQKETCL (484 aa)) are cytoplasmic. One can recognise a Protein kinase domain in the interval 885–1152 (TKLDKKLGAG…EFCKVPQLFL (268 aa)). ATP is bound by residues 891 to 899 (LGAGAFGTV) and Lys919. The Proton acceptor role is filled by Asp1010. Polar residues predominate over residues 1265–1289 (GQTELSPSNGDYYNQPNTPSSSSGY). The interval 1265–1323 (GQTELSPSNGDYYNQPNTPSSSSGYYNEPHLKTKKPETSEEAEAVQYENEEVSQKETCL) is disordered. Positions 1293–1302 (PHLKTKKPET) are enriched in basic and acidic residues. Over residues 1303-1315 (SEEAEAVQYENEE) the composition is skewed to acidic residues.

Belongs to the protein kinase superfamily. Tyr protein kinase family. EGF receptor subfamily. In terms of tissue distribution, expressed in vulval precursor cells (at protein level). Expressed in ALA neurons, 2 ventral head neurons, a single neuron in the tail, pharyngeal-intestinal valve and posterior arcade epithelial cells.

It is found in the apical cell membrane. Its subcellular location is the basolateral cell membrane. The enzyme catalyses L-tyrosyl-[protein] + ATP = O-phospho-L-tyrosyl-[protein] + ADP + H(+). Functionally, tyrosine-protein kinase receptor which, upon binding ligand lin-3, activates 2 signaling cascades: the let-60/Ras and MAP kinase signaling pathway and the let-60-independent phospholipase C-mediated Ca(2+) signaling pathway. Each pathway regulates distinct functions. By activating let-60/Ras, regulates larval development, induction of vulva cell precursors during vulva development, male spicule formation and posterior development of the epidermis. Probably by activating phospholipase plc-3 and inositol 1,4,5-trisphosphate receptor itr-1 signaling cascade downstream of ligand lin-3, plays a role in ovulation by promoting ovulatory gonadal sheath cell contractions. Probably by regulating neuronal transmission in ALA neurons, mediates, independently of let-60/Ras, the decrease in pharyngeal pumping and locomotion during the quiescent state that precedes each larval molt, downstream of lin-3 and upstream of plc-3. The protein is Receptor tyrosine-protein kinase let-23 of Caenorhabditis elegans.